A 901-amino-acid polypeptide reads, in one-letter code: MLIPSKLSRPVRLDHTMVRERLLAKLSGANNFRLALVTSPAGYGKTTLVSQWAAGKNELGWYSLDEGDNQQERFASYLIAAIQQATGGHCSTSEAMAQKRQYASLRSLFAQLFIELAQWHRPLYLVIDDYHLITNPVIHDAMRFFLRHQPENFTLVVLSRNLPQLGIANLRVRDQLLEIGSQQLAFNHQEAKQFFDRRLSSPIEAAESSRMCDDVAGWATALQLIALSARQNHTSAHHSARRLAGINASHLSDYLVDEVLDNVDVSTRHFLLKSAILRSMNDALIVRVTGEENGQMRLEEIERQGLFLQRMDDTGEWFSYHPLFGSFLRQRCQWELAAELPEIHRAAAESWMEQGFPSEAIHHALAAGDAQMLRDILLNHAWGLFNHSELALLEESLKALPWESLLENPRLVLLQAWLMQSQHRYSEVNTLLARAEQEIKGVMDGTLHAEFNALRAQVAINDGNPEEAERLAKLALDELPLAWFYSRIVATSVHGEVLHCKGDLSQSLSLMQQTEQMARHHDVWHYALWSLIQQSEIQFAQGFLQAAWETQERAFQLIKEQHLEQLPMHEFLVRIRAQLLWAWARLDEAEASARSGIAVLSTFQPQQQLQCLTLLVQCSLARGDLDNARSQLNRLENLLGNGRYHCDWISNADKVRVIYWQLTGDKKSAANWLRHTPKPAFANNHFLQGQWRNIARAQILLGEFEPAEIVLEELNENARSLRLMSDLNRNLLLLNQLYWQSGRKNDAQRVLLDALQLANRTGFISHFVIEGEAMAQQLRQLIQLNTLPEMEQHRAQRILREINQHHRHKFAHFDEGFVERLLNHPDVPELIRTSPLTQREWQVLGLIYSGYSNEQIAGELAVAATTIKTHIRNLYQKLGVAHRQDAVQHAQQLLKMMGYGV.

Position 39–46 (39–46 (SPAGYGKT)) interacts with ATP. One can recognise an HTH luxR-type domain in the interval 829-894 (ELIRTSPLTQ…DAVQHAQQLL (66 aa)). The H-T-H motif DNA-binding region spans 853–872 (NEQIAGELAVAATTIKTHIR).

Belongs to the MalT family. In terms of assembly, monomer in solution. Oligomerizes to an active state in the presence of the positive effectors ATP and maltotriose.

Its activity is regulated as follows. Activated by ATP and maltotriose, which are both required for DNA binding. Positively regulates the transcription of the maltose regulon whose gene products are responsible for uptake and catabolism of malto-oligosaccharides. Specifically binds to the promoter region of its target genes, recognizing a short DNA motif called the MalT box. This Salmonella gallinarum (strain 287/91 / NCTC 13346) protein is HTH-type transcriptional regulator MalT.